The primary structure comprises 273 residues: Putative pyruvate, phosphate dikinase regulatory protein (273 aa).

Residue 153 to 160 (GVSRTSKT) coordinates ADP.

Belongs to the pyruvate, phosphate/water dikinase regulatory protein family. PDRP subfamily.

The catalysed reaction is N(tele)-phospho-L-histidyl/L-threonyl-[pyruvate, phosphate dikinase] + ADP = N(tele)-phospho-L-histidyl/O-phospho-L-threonyl-[pyruvate, phosphate dikinase] + AMP + H(+). It catalyses the reaction N(tele)-phospho-L-histidyl/O-phospho-L-threonyl-[pyruvate, phosphate dikinase] + phosphate + H(+) = N(tele)-phospho-L-histidyl/L-threonyl-[pyruvate, phosphate dikinase] + diphosphate. In terms of biological role, bifunctional serine/threonine kinase and phosphorylase involved in the regulation of the pyruvate, phosphate dikinase (PPDK) by catalyzing its phosphorylation/dephosphorylation. The chain is Putative pyruvate, phosphate dikinase regulatory protein from Rhizobium meliloti (strain 1021) (Ensifer meliloti).